The sequence spans 374 residues: Alcohol dehydrogenase 3, mitochondrial (374 aa).

A mitochondrion-targeting transit peptide spans 1-26 (MLRLTSARSIVSPLRKGAFGSIRTLA). The Zn(2+) site is built by C70, H93, C124, C127, C130, C138, and C180. Residues 204–210 (GAAGGLG), D228, K233, 295–297 (VGL), and R367 contribute to the NAD(+) site.

It belongs to the zinc-containing alcohol dehydrogenase family. Homotetramer. Requires Zn(2+) as cofactor.

It is found in the mitochondrion matrix. The catalysed reaction is a primary alcohol + NAD(+) = an aldehyde + NADH + H(+). The enzyme catalyses a secondary alcohol + NAD(+) = a ketone + NADH + H(+). The sequence is that of Alcohol dehydrogenase 3, mitochondrial (ADH3) from Kluyveromyces lactis (strain ATCC 8585 / CBS 2359 / DSM 70799 / NBRC 1267 / NRRL Y-1140 / WM37) (Yeast).